A 1108-amino-acid polypeptide reads, in one-letter code: Ubiquitin carboxyl-terminal hydrolase 5 (1108 aa).

The MATH domain maps to 55–187 (FQRFTWHIKS…DGALLLTAYV (133 aa)). Active-site nucleophile residues include cysteine 120 and cysteine 222. The region spanning 213-528 (VGLKNQGATC…SAYMLLYLRK (316 aa)) is the USP domain. The active-site Proton acceptor is the histidine 464.

Belongs to the peptidase C19 family.

The protein resides in the nucleus. It catalyses the reaction Thiol-dependent hydrolysis of ester, thioester, amide, peptide and isopeptide bonds formed by the C-terminal Gly of ubiquitin (a 76-residue protein attached to proteins as an intracellular targeting signal).. Its function is as follows. Hydrolase that deubiquitinates target proteins. Cleaves the UBL propeptide in sde2. This Schizosaccharomyces pombe (strain 972 / ATCC 24843) (Fission yeast) protein is Ubiquitin carboxyl-terminal hydrolase 5 (ubp5).